The sequence spans 208 residues: Ribosome maturation factor RimP (208 aa).

Belongs to the RimP family.

The protein localises to the cytoplasm. In terms of biological role, required for maturation of 30S ribosomal subunits. This chain is Ribosome maturation factor RimP, found in Bartonella tribocorum (strain CIP 105476 / IBS 506).